A 298-amino-acid chain; its full sequence is Tyrosine recombinase XerC (298 aa).

The 87-residue stretch at 2–88 (TDLHTDVERY…ALRSFFDWLV (87 aa)) folds into the Core-binding (CB) domain. A Tyr recombinase domain is found at 109 to 288 (HLPKNIDVDD…DFQHLASVYD (180 aa)). Catalysis depends on residues arginine 148, lysine 172, histidine 240, arginine 243, and histidine 266. The active-site O-(3'-phospho-DNA)-tyrosine intermediate is the tyrosine 275.

Belongs to the 'phage' integrase family. XerC subfamily. Forms a cyclic heterotetrameric complex composed of two molecules of XerC and two molecules of XerD, in which XerC interacts with XerD via its C-terminal region, XerD interacts with XerC via its C-terminal region and so on.

The protein localises to the cytoplasm. FtsK may regulate the catalytic switch between XerC and XerD in the heterotetrameric complex during the two steps of the recombination process. Functionally, site-specific tyrosine recombinase, which acts by catalyzing the cutting and rejoining of the recombining DNA molecules. Binds cooperatively to specific DNA consensus sequences that are separated from XerD binding sites by a short central region, forming the heterotetrameric XerC-XerD complex that recombines DNA substrates. The complex is essential to convert dimers of the bacterial chromosome into monomers to permit their segregation at cell division. It also contributes to the segregational stability of plasmids. In the complex XerC specifically exchanges the top DNA strands. This chain is Tyrosine recombinase XerC, found in Escherichia coli O127:H6 (strain E2348/69 / EPEC).